A 460-amino-acid chain; its full sequence is Proline--tRNA ligase (460 aa).

Belongs to the class-II aminoacyl-tRNA synthetase family. ProS type 3 subfamily. In terms of assembly, homodimer.

It is found in the cytoplasm. It catalyses the reaction tRNA(Pro) + L-proline + ATP = L-prolyl-tRNA(Pro) + AMP + diphosphate. Its function is as follows. Catalyzes the attachment of proline to tRNA(Pro) in a two-step reaction: proline is first activated by ATP to form Pro-AMP and then transferred to the acceptor end of tRNA(Pro). In Methanococcus maripaludis (strain C6 / ATCC BAA-1332), this protein is Proline--tRNA ligase.